Here is a 110-residue protein sequence, read N- to C-terminus: MALWLQAFTLLVLLVLSSPGAQSASSQHLCGSHLVDALYMVCGEKGFFYQPKTKRDVDPLLGFLSPKSAQENEADEYPYKDQGDLKVKRGIVEQCCHHPCNIFDLQNYCN.

The signal sequence occupies residues 1 to 23 (MALWLQAFTLLVLLVLSSPGAQS). Cystine bridges form between Cys30–Cys96, Cys42–Cys109, and Cys95–Cys100. A propeptide spans 56–87 (DVDPLLGFLSPKSAQENEADEYPYKDQGDLKV) (c peptide).

It belongs to the insulin family. As to quaternary structure, heterodimer of a B chain and an A chain linked by two disulfide bonds.

It is found in the secreted. Insulin decreases blood glucose concentration. It increases cell permeability to monosaccharides, amino acids and fatty acids. It accelerates glycolysis, the pentose phosphate cycle, and glycogen synthesis in liver. This Pantodon buchholzi (Freshwater butterflyfish) protein is Insulin (ins).